The sequence spans 201 residues: 8-oxoguanine DNA glycosylase/AP lyase (201 aa).

Residues K126 and D144 contribute to the active site.

The protein belongs to the type-2 OGG1 family.

The catalysed reaction is 2'-deoxyribonucleotide-(2'-deoxyribose 5'-phosphate)-2'-deoxyribonucleotide-DNA = a 3'-end 2'-deoxyribonucleotide-(2,3-dehydro-2,3-deoxyribose 5'-phosphate)-DNA + a 5'-end 5'-phospho-2'-deoxyribonucleoside-DNA + H(+). In terms of biological role, catalyzes the excision of an oxidatively damaged form of guanine (7,8-dihydro-8-oxoguanine = 8-oxoG) from DNA. Also cleaves the DNA backbone at apurinic/apyrimidinic sites (AP sites). This is 8-oxoguanine DNA glycosylase/AP lyase from Metallosphaera sedula (strain ATCC 51363 / DSM 5348 / JCM 9185 / NBRC 15509 / TH2).